The sequence spans 635 residues: Biosynthetic arginine decarboxylase (635 aa).

Position 100 is an N6-(pyridoxal phosphate)lysine (Lys-100). Residue 282–292 (LDIGGGLGVDY) participates in substrate binding.

It belongs to the Orn/Lys/Arg decarboxylase class-II family. SpeA subfamily. Mg(2+) serves as cofactor. The cofactor is pyridoxal 5'-phosphate.

The enzyme catalyses L-arginine + H(+) = agmatine + CO2. It functions in the pathway amine and polyamine biosynthesis; agmatine biosynthesis; agmatine from L-arginine: step 1/1. Its function is as follows. Catalyzes the biosynthesis of agmatine from arginine. The sequence is that of Biosynthetic arginine decarboxylase from Geobacter sp. (strain M21).